We begin with the raw amino-acid sequence, 234 residues long: Sugar fermentation stimulation protein A (234 aa).

A DNA-binding region (H-T-H motif) is located at residues 201-220 (LLSEAQNKGVEVLAYKAELS).

The protein belongs to the SfsA family.

In terms of biological role, binds to DNA non-specifically. Could be a regulatory factor involved in maltose metabolism. This Salmonella typhi protein is Sugar fermentation stimulation protein A.